The primary structure comprises 520 residues: GMP synthase [glutamine-hydrolyzing] (520 aa).

The Glutamine amidotransferase type-1 domain occupies 9 to 202 (TILIIDFGSQ…VHRIVGVKPG (194 aa)). Cysteine 86 acts as the Nucleophile in catalysis. Catalysis depends on residues histidine 176 and glutamate 178. The GMPS ATP-PPase domain maps to 203–395 (WTMGAYREQA…LGLPDSFIGR (193 aa)). 230-236 (SGGVDSS) serves as a coordination point for ATP.

As to quaternary structure, homodimer.

It carries out the reaction XMP + L-glutamine + ATP + H2O = GMP + L-glutamate + AMP + diphosphate + 2 H(+). It participates in purine metabolism; GMP biosynthesis; GMP from XMP (L-Gln route): step 1/1. Its function is as follows. Catalyzes the synthesis of GMP from XMP. This Brucella abortus (strain S19) protein is GMP synthase [glutamine-hydrolyzing].